The following is a 217-amino-acid chain: Glutathione S-transferase (217 aa).

In terms of domain architecture, GST N-terminal spans 2–82 (TIKVHGNPRS…YLAYTHDHQN (81 aa)). Residues S11, 40 to 41 (HK), 53 to 54 (QV), and 66 to 67 (ES) each bind glutathione. The 127-residue stretch at 91 to 217 (EKHEMAAQLV…EKTLALQKQA (127 aa)) folds into the GST C-terminal domain.

The protein belongs to the GST superfamily. Phi family.

The protein localises to the cytoplasm. The enzyme catalyses RX + glutathione = an S-substituted glutathione + a halide anion + H(+). In terms of biological role, conjugation of reduced glutathione to a wide number of exogenous and endogenous hydrophobic electrophiles. The sequence is that of Glutathione S-transferase (GST) from Silene vulgaris (Bladder campion).